Here is a 521-residue protein sequence, read N- to C-terminus: Medium/long-chain-fatty-acid--[acyl-carrier-protein] ligase MbtM (521 aa).

Positions 146–172 (RRCPEPPAPHANPAILQGTAGSTGTPK) are disordered.

Belongs to the ATP-dependent AMP-binding enzyme family.

It catalyses the reaction a long-chain fatty acid + holo-[ACP] + ATP = a long-chain fatty acyl-[ACP] + AMP + diphosphate. It carries out the reaction a medium-chain fatty acid + holo-[ACP] + ATP = a medium-chain fatty acyl-[ACP] + AMP + diphosphate. Its pathway is siderophore biosynthesis; mycobactin biosynthesis. In terms of biological role, activates lipidic moieties required for mycobactin biosynthesis. Converts medium- to long-chain aliphatic fatty acids into acyl adenylate, which is further transferred on to the phosphopantetheine arm of the carrier protein MbtL. The chain is Medium/long-chain-fatty-acid--[acyl-carrier-protein] ligase MbtM (mbtM) from Mycolicibacterium paratuberculosis (strain ATCC BAA-968 / K-10) (Mycobacterium paratuberculosis).